The sequence spans 198 residues: Recombination protein RecR (198 aa).

Residues 56–71 (CTTCGNIDTHDPCAIC) form a C4-type zinc finger. One can recognise a Toprim domain in the interval 79-174 (RSLCVVEEVS…RLTQLAHGLP (96 aa)).

This sequence belongs to the RecR family.

In terms of biological role, may play a role in DNA repair. It seems to be involved in an RecBC-independent recombinational process of DNA repair. It may act with RecF and RecO. This Sphingopyxis alaskensis (strain DSM 13593 / LMG 18877 / RB2256) (Sphingomonas alaskensis) protein is Recombination protein RecR.